A 260-amino-acid chain; its full sequence is Adenosylcobinamide-GDP ribazoletransferase (260 aa).

The next 6 helical transmembrane spans lie at 40–60, 64–84, 117–137, 142–162, 188–208, and 209–229; these read AFPF…LLLL, ADPL…TGAL, YGAI…AVIA, PLTA…AIAW, QFAL…AFGL, and RPLV…TAFI.

It belongs to the CobS family. Mg(2+) serves as cofactor.

The protein localises to the cell inner membrane. The enzyme catalyses alpha-ribazole + adenosylcob(III)inamide-GDP = adenosylcob(III)alamin + GMP + H(+). It carries out the reaction alpha-ribazole 5'-phosphate + adenosylcob(III)inamide-GDP = adenosylcob(III)alamin 5'-phosphate + GMP + H(+). It functions in the pathway cofactor biosynthesis; adenosylcobalamin biosynthesis; adenosylcobalamin from cob(II)yrinate a,c-diamide: step 7/7. In terms of biological role, joins adenosylcobinamide-GDP and alpha-ribazole to generate adenosylcobalamin (Ado-cobalamin). Also synthesizes adenosylcobalamin 5'-phosphate from adenosylcobinamide-GDP and alpha-ribazole 5'-phosphate. The sequence is that of Adenosylcobinamide-GDP ribazoletransferase from Rhizobium johnstonii (strain DSM 114642 / LMG 32736 / 3841) (Rhizobium leguminosarum bv. viciae).